The primary structure comprises 139 residues: uncharacterized protein (139 aa).

Positions 8 to 63 constitute an HTH cro/C1-type domain; the sequence is LRELRRARKLTVNQLAVYSGISSATISKIENGKRGTPKPATIKKLAAVLKVPYENL. Residues 19-38 constitute a DNA-binding region (H-T-H motif); that stretch reads VNQLAVYSGISSATISKIEN.

This is an uncharacterized protein from Bacillus subtilis (strain 168).